The chain runs to 181 residues: Oligoribonuclease (181 aa).

The Exonuclease domain maps to 8–171 (LIWIDLEMTG…DDIRESVAEL (164 aa)). Tyrosine 129 is an active-site residue.

It belongs to the oligoribonuclease family.

It is found in the cytoplasm. Functionally, 3'-to-5' exoribonuclease specific for small oligoribonucleotides. In Shigella flexneri, this protein is Oligoribonuclease.